The sequence spans 176 residues: ATP-dependent protease subunit HslV (176 aa).

The active site involves Thr2. Residues Gly157, Cys160, and Thr163 each coordinate Na(+).

Belongs to the peptidase T1B family. HslV subfamily. A double ring-shaped homohexamer of HslV is capped on each side by a ring-shaped HslU homohexamer. The assembly of the HslU/HslV complex is dependent on binding of ATP.

Its subcellular location is the cytoplasm. It carries out the reaction ATP-dependent cleavage of peptide bonds with broad specificity.. Allosterically activated by HslU binding. Its function is as follows. Protease subunit of a proteasome-like degradation complex believed to be a general protein degrading machinery. The chain is ATP-dependent protease subunit HslV from Salmonella gallinarum (strain 287/91 / NCTC 13346).